The chain runs to 522 residues: Probable cytochrome P450 12e1, mitochondrial (522 aa).

Cys468 contacts heme.

It belongs to the cytochrome P450 family. It depends on heme as a cofactor.

Its subcellular location is the mitochondrion membrane. The protein is Probable cytochrome P450 12e1, mitochondrial (Cyp12e1) of Drosophila melanogaster (Fruit fly).